The primary structure comprises 509 residues: Transmembrane protein 104 homolog (509 aa).

At 1–19 the chain is on the cytoplasmic side; that stretch reads MPRLVNGREAAPTYSNLVG. A helical membrane pass occupies residues 20 to 40; that stretch reads FIFIFNLIVGTGALTLPGVFA. Over 41–45 the chain is Extracellular; that stretch reads RAGWM. Residues 46-66 form a helical membrane-spanning segment; sequence LSLIVIVLLAIISYMTVTFII. Residues 67–151 are Cytoplasmic-facing; sequence EAMACANAIR…ATLFFNEFGR (85 aa). Residues 152 to 172 form a helical membrane-spanning segment; that stretch reads VMFYLCLIVYLYGDLSIYSAA. The Extracellular segment spans residues 173 to 218; it reads VARSLRDVVCDQTNGTDTNNLMYWPGDFENNTSLACWKEHTISRLN. Residues asparagine 186, asparagine 202, and asparagine 203 are each glycosylated (N-linked (GlcNAc...) asparagine). A helical transmembrane segment spans residues 219–239; the sequence is MYRVLLIGFTLIFGPFVYFNV. The Cytoplasmic segment spans residues 240–248; that stretch reads QKTKYLQML. Residues 249-269 form a helical membrane-spanning segment; it reads TAAFRWMAFTLMICISLKLLI. The Extracellular segment spans residues 270 to 277; it reads SRGAKGHP. The helical transmembrane segment at 278 to 298 threads the bilayer; it reads ATFNVYGIPSLFGACVYSFMC. Over 299-320 the chain is Cytoplasmic; it reads HHSLPSLLAPIRHKSMVSKILS. Residues 321–341 form a helical membrane-spanning segment; it reads IDYIIICAFYILLAMTGIFAF. Residues 342-361 are Extracellular-facing; sequence ERIEDLYTLDFLPYDVAYVD. Residues 362 to 382 form a helical membrane-spanning segment; sequence FWSGLLICIDYFLALFPIFTL. Over 383–411 the chain is Cytoplasmic; it reads STSFPIVAITLKNNLQSLFLDMSQYESYS. A helical transmembrane segment spans residues 412–432; that stretch reads VILRLCFPLLAIIPPFCITYF. Residues 433–439 lie on the Extracellular side of the membrane; it reads TESLSSL. Residues 440 to 460 form a helical membrane-spanning segment; the sequence is VAFTGTYAGTGIQYIIPVFLV. Over 461–487 the chain is Cytoplasmic; that stretch reads YFARRTCSELLGSGVVNRFKSPFKSSA. The chain crosses the membrane as a helical span at residues 488–508; sequence WLVFVFIWSILCVCLVSINLF. Residue serine 509 is a topological domain, extracellular.

This sequence belongs to the TMEM104 family.

It is found in the membrane. In Drosophila melanogaster (Fruit fly), this protein is Transmembrane protein 104 homolog.